The chain runs to 363 residues: Cobalt-precorrin-5B C(1)-methyltransferase (363 aa).

Belongs to the CbiD family.

It carries out the reaction Co-precorrin-5B + S-adenosyl-L-methionine = Co-precorrin-6A + S-adenosyl-L-homocysteine. Its pathway is cofactor biosynthesis; adenosylcobalamin biosynthesis; cob(II)yrinate a,c-diamide from sirohydrochlorin (anaerobic route): step 6/10. Functionally, catalyzes the methylation of C-1 in cobalt-precorrin-5B to form cobalt-precorrin-6A. This is Cobalt-precorrin-5B C(1)-methyltransferase from Burkholderia mallei (strain ATCC 23344).